Here is a 762-residue protein sequence, read N- to C-terminus: MSVPKKRNHGKLPPSTKDVDDPSLKYTKAAPKCEQVAEHWLLQPLPEPESRYSFWVTIVTLLAFAARFYKIWYPKEVVFDEVHFGKFASYYLERSYFFDVHPPFAKMMIAFIGWLCGYDGSFKFDEIGYSYETHPAPYIAYRSFNAILGTLTVPIMFNTLKELNFRAITCAFASLLVAIDTAHVTETRLILLDAILIISIAATMYCYVRFYKCQLRQPFTWSWYIWLHATGLSLSFVISTKYVGVMTYSAIGFAAVVNLWQLLDIKAGLSLRQFMRHFSKRLNGLVLIPFVIYLFWFWVHFTVLNTSGPGDAFMSAEFQETLKDSPLSVDSKTVNYFDIITIKHQDTDAFLHSHLARYPQRYEDGRISSAGQQVTGYTHPDFNNQWEVLPPHGSDVGKGQAVLLNQHIRLRHVATDTYLLAHDVASPFYPTNEEITTVTLEEGDGELYPETLFAFQPLKKSDEGHVLKSKTVSFRLFHVDTSVALWTHNDELLPDWGFQQQEINGNKKVIDPSNNWVVDEIVNLDEVRKVYIPKVVKPLPFLKKWIETQKSMFEHNNKLSSEHPFASEPYSWPGSLSGVSFWTNGDEKKQIYFIGNIIGWWFQVISLAVFVGIIVADLITRHRGYYALNKMTREKLYGPLMFFFVSWCCHYFPFFLMARQKFLHHYLPAHLIACLFSGALWEVIFSDCKSLDLEKDEDISGASYERNPKVYVKPYTVFLVCVSCAVAWFFVYFSPLVYGDVSLSPSEVVSREWFDIELNFSK.

A compositionally biased stretch (basic residues) spans 1-10; that stretch reads MSVPKKRNHG. Residues 1–24 form a disordered region; that stretch reads MSVPKKRNHGKLPPSTKDVDDPSL. Topologically, residues 1–53 are lumenal; that stretch reads MSVPKKRNHGKLPPSTKDVDDPSLKYTKAAPKCEQVAEHWLLQPLPEPESRYS. The chain crosses the membrane as a helical span at residues 54–74; sequence FWVTIVTLLAFAARFYKIWYP. Over 75–136 the chain is Cytoplasmic; the sequence is KEVVFDEVHF…IGYSYETHPA (62 aa). The chain crosses the membrane as a helical span at residues 137 to 157; that stretch reads PYIAYRSFNAILGTLTVPIMF. At 158-166 the chain is on the lumenal side; the sequence is NTLKELNFR. A helical transmembrane segment spans residues 167–187; it reads AITCAFASLLVAIDTAHVTET. Residues 188–189 lie on the Cytoplasmic side of the membrane; the sequence is RL. The chain crosses the membrane as a helical span at residues 190–210; that stretch reads ILLDAILIISIAATMYCYVRF. The Lumenal segment spans residues 211–217; that stretch reads YKCQLRQ. Residues 218 to 238 form a helical membrane-spanning segment; the sequence is PFTWSWYIWLHATGLSLSFVI. Over 239 to 242 the chain is Cytoplasmic; sequence STKY. A helical transmembrane segment spans residues 243 to 263; that stretch reads VGVMTYSAIGFAAVVNLWQLL. Residues 264–283 are Lumenal-facing; it reads DIKAGLSLRQFMRHFSKRLN. Residues 284-304 form a helical membrane-spanning segment; sequence GLVLIPFVIYLFWFWVHFTVL. The Cytoplasmic portion of the chain corresponds to 305-593; it reads NTSGPGDAFM…NGDEKKQIYF (289 aa). 3 consecutive MIR domains span residues 331–391, 399–458, and 464–521; these read SKTV…VLPP, GQAV…FQPL, and GHVL…VDEI. The chain crosses the membrane as a helical span at residues 594-614; the sequence is IGNIIGWWFQVISLAVFVGII. Topologically, residues 615–635 are lumenal; the sequence is VADLITRHRGYYALNKMTREK. Residues 636–656 traverse the membrane as a helical segment; sequence LYGPLMFFFVSWCCHYFPFFL. Residues 657–716 are Cytoplasmic-facing; it reads MARQKFLHHYLPAHLIACLFSGALWEVIFSDCKSLDLEKDEDISGASYERNPKVYVKPYT. A helical transmembrane segment spans residues 717–737; that stretch reads VFLVCVSCAVAWFFVYFSPLV. Residues 738–762 are Lumenal-facing; that stretch reads YGDVSLSPSEVVSREWFDIELNFSK. An N-linked (GlcNAc...) asparagine glycan is attached at N759.

The protein belongs to the glycosyltransferase 39 family. As to quaternary structure, forms a functional homodimer and may form a heterodimer with PMT6. Interacts with RCR1.

It is found in the endoplasmic reticulum membrane. The enzyme catalyses a di-trans,poly-cis-dolichyl beta-D-mannosyl phosphate + L-seryl-[protein] = 3-O-(alpha-D-mannosyl)-L-seryl-[protein] + a di-trans,poly-cis-dolichyl phosphate + H(+). It catalyses the reaction a di-trans,poly-cis-dolichyl beta-D-mannosyl phosphate + L-threonyl-[protein] = 3-O-(alpha-D-mannosyl)-L-threonyl-[protein] + a di-trans,poly-cis-dolichyl phosphate + H(+). It functions in the pathway protein modification; protein glycosylation. Its function is as follows. Protein O-mannosyltransferase involved in O-glycosylation which is essential for cell wall rigidity. Forms a homodimeric complex to transfer mannose from Dol-P-mannose to Ser or Thr residues on proteins. Specifically acts on secretory proteins with an ER-luminally oriented Ser/Thr-rich region flanked by a membrane anchor such as FUS1, AXL2, GAS1, KEX2, MID2, WSC1, WSC2, OPY2, PRM5, RAX2, or YNL176. This Saccharomyces cerevisiae (strain ATCC 204508 / S288c) (Baker's yeast) protein is Dolichyl-phosphate-mannose--protein mannosyltransferase 4.